We begin with the raw amino-acid sequence, 675 residues long: Methionine--tRNA ligase (675 aa).

Positions 15–25 match the 'HIGH' region motif; that stretch reads PYANGPIHLGH. Positions 146, 149, 159, and 162 each coordinate Zn(2+). The 'KMSKS' region motif lies at 332–336; it reads KMSKS. Lys335 provides a ligand contact to ATP. The 103-residue stretch at 573 to 675 folds into the tRNA-binding domain; it reads DFAKVDMRVA…SGAQPGMQVK (103 aa).

Belongs to the class-I aminoacyl-tRNA synthetase family. MetG type 1 subfamily. In terms of assembly, homodimer. Zn(2+) is required as a cofactor.

The protein resides in the cytoplasm. The enzyme catalyses tRNA(Met) + L-methionine + ATP = L-methionyl-tRNA(Met) + AMP + diphosphate. Is required not only for elongation of protein synthesis but also for the initiation of all mRNA translation through initiator tRNA(fMet) aminoacylation. This chain is Methionine--tRNA ligase, found in Photorhabdus laumondii subsp. laumondii (strain DSM 15139 / CIP 105565 / TT01) (Photorhabdus luminescens subsp. laumondii).